Reading from the N-terminus, the 474-residue chain is MKILYCAAEADPFIKTGGLADVAGTLPLEMKKQGHDVKVVIPLYKLIDEEYKKKFEFEGSFYVDLDFKHHYVGVFKYIHRGVEFYFLDNEDYFNRDNVYGEYDDCERFVFFSKACVQLLRYIDFDCDIIHSNDWHTAMVNVYARDFAKGDPFYESIKTVFTIHNLKYQGVFSSNSLRQTDLSPMYFTEDALKFYDAINFMKGAIVFSDRVTTVSKTYADEIKYSFFGEGLDGVIRQYHYKISGITNGIDTTIWNPETDKYLFKNYSLKNIKDKDENKKALQRMYGLEEKNVPVFAMVTRLVENKGLELVRYIMDEFLTTEDVQVVILGTGDYSYEEMFKYYEWKFPDKLKANIYYNNEESHKIYAGADFLMMPSIFEPCGISQLIAMRYGTIPVVRETGGLRDTVQSFNEFSKEGNGFSFTNINAHDFLYTLRRAISFYYNDDFNIIKENAMNSKNDWEKSAKEYIELYEEIIK.

Position 15 (Lys15) interacts with ADP-alpha-D-glucose.

Belongs to the glycosyltransferase 1 family. Bacterial/plant glycogen synthase subfamily.

It carries out the reaction [(1-&gt;4)-alpha-D-glucosyl](n) + ADP-alpha-D-glucose = [(1-&gt;4)-alpha-D-glucosyl](n+1) + ADP + H(+). The protein operates within glycan biosynthesis; glycogen biosynthesis. Its function is as follows. Synthesizes alpha-1,4-glucan chains using ADP-glucose. The protein is Glycogen synthase of Finegoldia magna (strain ATCC 29328 / DSM 20472 / WAL 2508) (Peptostreptococcus magnus).